We begin with the raw amino-acid sequence, 133 residues long: UPF0102 protein ABSDF1354 (133 aa).

This sequence belongs to the UPF0102 family.

This is UPF0102 protein ABSDF1354 from Acinetobacter baumannii (strain SDF).